Here is a 637-residue protein sequence, read N- to C-terminus: MEGGCGSQWKAAGFLFCVMVFASAERPVFTNHFLVELHKDGEEEARQVAAEHGFGVRKLPFAEGLYHFYHNGLAKAKRRRSLHHKRQLERDPRIKMALQQEGFDRKKRGYRDINEIDINMNDPLFTKQWYLFNTGQADGTPGLDLNVAEAWELGYTGKGVTIGIMDDGIDYLHPDLAYNYNADASYDFSSNDPYPYPRYTDDWFNSHGTRCAGEVSAAASNNICGVGVAYNSKVAGIRMLDQPFMTDIIEASSISHMPQLIDIYSASWGPTDNGKTVDGPRELTLQAMADGVNKGRGGKGSIYVWASGDGGSYDDCNCDGYASSMWTISINSAINDGRTALYDESCSSTLASTFSNGRKRNPEAGVATTDLYGNCTLRHSGTSAAAPEAAGVFALALEANLDLTWRDMQHLTVLTSKRNQLHDEVHQWRRNGVGLEFNHLFGYGVLDAGAMVKMAKDWKTVPERFHCVGGSVQNPEKIPPTGKLVLTLKTNACEGKENFVRYLEHVQAVITVNATRRGDLNINMTSPMGTKSILLSRRPRDDDSKVGFDKWPFMTTHTWGEDARGTWTLELGFVGSAPQKGLLKEWTLMLHGTQSAPYIDQVVRDYQSKLAMSKKQELEEELDEAVERSLQSILRKN.

The N-terminal stretch at M1–A24 is a signal peptide. A propeptide spanning residues E25–R108 is cleaved from the precursor. Positions Q128–V452 constitute a Peptidase S8 domain. Active-site charge relay system residues include D166 and H207. Intrachain disulfides connect C224–C375 and C316–C346. N374 carries N-linked (GlcNAc...) asparagine glycosylation. Catalysis depends on S383, which acts as the Charge relay system. The P/Homo B domain maps to T460–A596. Residues C467 and C493 are joined by a disulfide bond. Residues N513 and N523 are each glycosylated (N-linked (GlcNAc...) asparagine).

The protein belongs to the peptidase S8 family. Furin subfamily.

It is found in the cytoplasmic vesicle. The protein localises to the secretory vesicle. Its subcellular location is the secreted. The catalysed reaction is Release of protein hormones and neuropeptides from their precursors, generally by hydrolysis of -Lys-Arg-|- bonds.. Serine endopeptidase which is involved in the processing of hormone and other protein precursors at sites comprised of pairs of basic amino acid residues. Responsible for the release of glucagon from proglucagon in pancreatic A cells. This is Neuroendocrine convertase 2 (Pcsk2) from Mus musculus (Mouse).